The chain runs to 206 residues: Pro-glucagon (206 aa).

Residues 1–22 form the signal peptide; sequence MKMKSIYFIAGLLLMIVQGSWQ. Positions 27–57 are disordered; the sequence is DTEEKSRSFKASQSEPLDESRQLNEVKRHSQ. Basic and acidic residues predominate over residues 44-54; the sequence is DESRQLNEVKR. Positions 86–109 are excised as a propeptide; that stretch reads NGQQGQEDKENDKFPDQLSSNAIS. Arg147 carries the arginine amide modification. 2 consecutive propeptides follow at residues 151 to 163 and 199 to 206; these read DFPE…EEMG and RDLLGEYQ.

Belongs to the glucagon family. Post-translationally, proglucagon is post-translationally processed in a tissue-specific manner in pancreatic A cells and intestinal L cells. In pancreatic A cells, the major bioactive hormone is glucagon cleaved by PCSK2/PC2. In the intestinal L cells PCSK1/PC1 liberates GLP-1 and GLP-2. GLP-1 is further N-terminally truncated by post-translational processing in the intestinal L cells resulting in GLP-1(7-37) GLP-1-(7-36)amide.

The protein localises to the secreted. Its function is as follows. Plays a key role in glucose metabolism and homeostasis. Regulates blood glucose by increasing gluconeogenesis and decreasing glycolysis. In terms of biological role, potent stimulator of glucose-dependent insulin release. Plays important roles on gastric motility and the suppression of plasma glucagon levels. May be involved in the suppression of satiety and stimulation of glucose disposal in peripheral tissues, independent of the actions of insulin. Has growth-promoting activities on intestinal epithelium. May also regulate the hypothalamic pituitary axis (HPA) via effects on LH, TSH, CRH, oxytocin, and vasopressin secretion. Increases islet mass through stimulation of islet neogenesis and pancreatic beta cell proliferation. Stimulates intestinal growth and up-regulates villus height in the small intestine, concomitant with increased crypt cell proliferation and decreased enterocyte apoptosis. The gastrointestinal tract, from the stomach to the colon is the principal target for GLP-2 action. Plays a key role in nutrient homeostasis, enhancing nutrient assimilation through enhanced gastrointestinal function, as well as increasing nutrient disposal. Stimulates intestinal glucose transport and decreases mucosal permeability. The sequence is that of Pro-glucagon (GCG) from Gallus gallus (Chicken).